The sequence spans 322 residues: tRNA-specific adenosine deaminase subunit TAD3 (322 aa).

Positions 162-283 (EVRNELSRAS…EMQRTGSLKL (122 aa)) constitute a CMP/dCMP-type deaminase domain. Zn(2+) contacts are provided by H216, C254, C257, and C322.

It belongs to the cytidine and deoxycytidylate deaminase family. ADAT3 subfamily. As to quaternary structure, heterodimer with TAD2.

The protein resides in the cytoplasm. Its subcellular location is the nucleus. It localises to the peroxisome. Functionally, structural subunit of tRNA-specific adenosine deaminase, which deaminates adenosine-34 (the first, also called wobble position of the anticodon) to inosine in many tRNAs. Inosine-34 allows the decoding of 3 different nucleotides at the third position of mRNA codons, as inosine is able to pair with U, C, and A. In Saccharomyces cerevisiae (strain ATCC 204508 / S288c) (Baker's yeast), this protein is tRNA-specific adenosine deaminase subunit TAD3 (TAD3).